The sequence spans 467 residues: 5'-nucleotidase domain-containing protein 1 (467 aa).

The active-site Nucleophile is the Asp16. 2 residues coordinate Mg(2+): Asp16 and Asp18. The active-site Proton donor is the Asp18. The residue at position 181 (Lys181) is an N6-acetyllysine. Asp323 contributes to the Mg(2+) binding site.

Belongs to the 5'(3')-deoxyribonucleotidase family.

The chain is 5'-nucleotidase domain-containing protein 1 (Nt5dc1) from Mus musculus (Mouse).